A 226-amino-acid polypeptide reads, in one-letter code: Transmembrane 4 L6 family member 20 (226 aa).

Residues 1 to 14 (MTCCEGWTSCNGFS) are Lumenal-facing. The chain crosses the membrane as a helical span at residues 15–35 (LLILILLGVVINCIPLGISLV). Residues 36-49 (EADSTSQNPISCYE) are Cytoplasmic-facing. Residues 50–70 (WWFPGIIGAGLMAIPATTMSL) form a helical membrane-spanning segment. The Lumenal portion of the chain corresponds to 71–83 (AARKRACCNNKTG). The helical transmembrane segment at 84–104 (MFLSSLFSVITVVGAVYCMLV) threads the bilayer. At 105-191 (SLQALLEGPL…RIFHFSVFMS (87 aa)) the chain is on the cytoplasmic side. Residues 192–212 (LLLVGILELLFGLSQILIGFL) traverse the membrane as a helical segment. Residues 213–226 (GCLCGVSQRRSQIV) lie on the Lumenal side of the membrane.

This sequence belongs to the L6 tetraspanin family. Glycosylated at Asn-132, Asn-148 and Asn-163 in presence of ceramide which inverts the orientation of TM4SF20 in membranes exposing these residues to the endoplasmic reticulum lumen. In terms of processing, cleaved by signal peptidase at Ser-14 but the peptide does not act as a signal peptide. Cleavage is inhibited by ceramide which inverts the orientation of TM4SF20 in membranes exposing the N-terminus to the cytosol and not to the endoplasmic reticulum lumen.

Its subcellular location is the membrane. The protein resides in the endoplasmic reticulum membrane. Polytopic transmembrane protein. Inhibits regulated intramembrane proteolysis (RIP) of CREB3L1, inhibiting its activation and the induction of collagen synthesis. In response to ceramide, which alters TM4SF20 membrane topology, stimulates RIP activation of CREB3L1. Ceramide reverses the direction through which transmembrane helices are translocated into the endoplasmic reticulum membrane during translation of TM4SF20, this mechanism is called 'regulated alternative translocation' (RAT) and regulates the function of the transmembrane protein. This Mus musculus (Mouse) protein is Transmembrane 4 L6 family member 20 (Tm4sf20).